A 353-amino-acid polypeptide reads, in one-letter code: Nicotinate-nucleotide--dimethylbenzimidazole phosphoribosyltransferase (353 aa).

The Proton acceptor role is filled by E318.

This sequence belongs to the CobT family.

It catalyses the reaction 5,6-dimethylbenzimidazole + nicotinate beta-D-ribonucleotide = alpha-ribazole 5'-phosphate + nicotinate + H(+). It participates in nucleoside biosynthesis; alpha-ribazole biosynthesis; alpha-ribazole from 5,6-dimethylbenzimidazole: step 1/2. Its function is as follows. Catalyzes the synthesis of alpha-ribazole-5'-phosphate from nicotinate mononucleotide (NAMN) and 5,6-dimethylbenzimidazole (DMB). This Chloroflexus aggregans (strain MD-66 / DSM 9485) protein is Nicotinate-nucleotide--dimethylbenzimidazole phosphoribosyltransferase.